The sequence spans 150 residues: 3-hydroxyacyl-[acyl-carrier-protein] dehydratase FabZ (150 aa).

Residue histidine 54 is part of the active site.

This sequence belongs to the thioester dehydratase family. FabZ subfamily.

Its subcellular location is the cytoplasm. The catalysed reaction is a (3R)-hydroxyacyl-[ACP] = a (2E)-enoyl-[ACP] + H2O. Involved in unsaturated fatty acids biosynthesis. Catalyzes the dehydration of short chain beta-hydroxyacyl-ACPs and long chain saturated and unsaturated beta-hydroxyacyl-ACPs. This Vibrio vulnificus (strain CMCP6) protein is 3-hydroxyacyl-[acyl-carrier-protein] dehydratase FabZ.